A 218-amino-acid chain; its full sequence is Octanoyltransferase (218 aa).

Positions 30-217 (GEAGELVWLV…SFARNFPPLA (188 aa)) constitute a BPL/LPL catalytic domain. Residues 68-75 (RGGQYTYH), 148-150 (AIG), and 161-163 (GIA) each bind substrate. The Acyl-thioester intermediate role is filled by Cys179.

The protein belongs to the LipB family.

It localises to the cytoplasm. It carries out the reaction octanoyl-[ACP] + L-lysyl-[protein] = N(6)-octanoyl-L-lysyl-[protein] + holo-[ACP] + H(+). The protein operates within protein modification; protein lipoylation via endogenous pathway; protein N(6)-(lipoyl)lysine from octanoyl-[acyl-carrier-protein]: step 1/2. Functionally, catalyzes the transfer of endogenously produced octanoic acid from octanoyl-acyl-carrier-protein onto the lipoyl domains of lipoate-dependent enzymes. Lipoyl-ACP can also act as a substrate although octanoyl-ACP is likely to be the physiological substrate. This is Octanoyltransferase from Paracoccus denitrificans (strain Pd 1222).